Here is a 287-residue protein sequence, read N- to C-terminus: 33 kDa chaperonin (287 aa).

Cystine bridges form between cysteine 233–cysteine 235 and cysteine 266–cysteine 269.

The protein belongs to the HSP33 family. Post-translationally, under oxidizing conditions two disulfide bonds are formed involving the reactive cysteines. Under reducing conditions zinc is bound to the reactive cysteines and the protein is inactive.

The protein resides in the cytoplasm. Its function is as follows. Redox regulated molecular chaperone. Protects both thermally unfolding and oxidatively damaged proteins from irreversible aggregation. Plays an important role in the bacterial defense system toward oxidative stress. This is 33 kDa chaperonin from Thermodesulfovibrio yellowstonii (strain ATCC 51303 / DSM 11347 / YP87).